The primary structure comprises 259 residues: Thiazole synthase (259 aa).

Lysine 95 serves as the catalytic Schiff-base intermediate with DXP. 1-deoxy-D-xylulose 5-phosphate is bound by residues glycine 156, 182–183, and 204–205; these read AG and NT.

Belongs to the ThiG family. As to quaternary structure, homotetramer. Forms heterodimers with either ThiH or ThiS.

It is found in the cytoplasm. The enzyme catalyses [ThiS sulfur-carrier protein]-C-terminal-Gly-aminoethanethioate + 2-iminoacetate + 1-deoxy-D-xylulose 5-phosphate = [ThiS sulfur-carrier protein]-C-terminal Gly-Gly + 2-[(2R,5Z)-2-carboxy-4-methylthiazol-5(2H)-ylidene]ethyl phosphate + 2 H2O + H(+). The protein operates within cofactor biosynthesis; thiamine diphosphate biosynthesis. Functionally, catalyzes the rearrangement of 1-deoxy-D-xylulose 5-phosphate (DXP) to produce the thiazole phosphate moiety of thiamine. Sulfur is provided by the thiocarboxylate moiety of the carrier protein ThiS. In vitro, sulfur can be provided by H(2)S. The polypeptide is Thiazole synthase (Serratia proteamaculans (strain 568)).